The sequence spans 1968 residues: Signal element on autosome protein 2 (1968 aa).

The segment covering 72-88 has biased composition (low complexity); that stretch reads TSSSFSSSLATTTTTSS. Disordered stretches follow at residues 72–252 and 271–364; these read TSSS…TPTQ and QVQQ…VQEQ. Positions 107–119 are enriched in basic residues; sequence SHHHPSSSHHHHP. 4 stretches are compositionally biased toward low complexity: residues 120-134, 144-165, 219-232, and 298-338; these read GQQQSSSSSSSSHLQ, HPYYHQQQPQHQHQQAQQYGQA, DQPSSSTGSSLPPL, and LSSI…SSSS. Residues 346-362 are compositionally biased toward polar residues; sequence PNASSSSLIKRQSQDVQ. Residues 413–440 form a C2H2-type 1 zinc finger; it reads YQCPNCNRNLANARNLQRHRQTCGSAQH. Disordered stretches follow at residues 451 to 499 and 538 to 601; these read RSPP…LYSP and WSRD…TLDP. Residues 452–467 are compositionally biased toward pro residues; it reads SPPPCASAPPVAPPTA. Positions 472-482 are enriched in polar residues; sequence FQHHNSTGNLT. The segment covering 483 to 498 has biased composition (low complexity); it reads LSYSSSSSRHQSSLYS. Residues 570-594 are compositionally biased toward basic and acidic residues; the sequence is PLHHLDSFDSADHRKETPRECHEPD. A C2H2-type 2; degenerate zinc finger spans residues 651–672; that stretch reads FTCEACKKSVSSERSLRRHYNT. Disordered stretches follow at residues 681–712 and 785–854; these read AASGEERPPTTKRKPATKRPSKKKEASEGPEK and VTSA…TGNP. Basic residues predominate over residues 690–702; it reads TTKRKPATKRPSK. Over residues 794–804 the composition is skewed to low complexity; it reads HQLPHQQPQQQ. Residues 812–824 are compositionally biased toward acidic residues; sequence LLNEQDESADDDG. A compositionally biased stretch (low complexity) spans 827–851; that stretch reads RSSSGTVSNSTTTTTTATTTSSKST. A C2H2-type 3; degenerate zinc finger spans residues 856-875; it reads FTCEHCARQLCSMSNLKRHR. 4 disordered regions span residues 882 to 905, 975 to 1069, 1083 to 1227, and 1246 to 1273; these read ASSSSNSAASRPPSQPSTPATAPA, GDAL…EHKN, RMDA…SPLD, and PGPLEQGQSSVDSQSTAEPSPRKASQQA. Low complexity-rich tracts occupy residues 981–1015, 1023–1046, and 1108–1131; these read QQHQQKMDQQIQIQFQQQQQQRFQHHQQQQQAGRI, ILNQVQNPPQQVQHNQHQNQMLNP, and PQRSQAPAPSRQQQQQPPVAYQVQ. Pro residues predominate over residues 1136–1146; that stretch reads PLPPMQLPPLQ. Low complexity predominate over residues 1147 to 1185; sequence NPHNQQQQHQMLHQSQMNYQQVQQVQQVQHVQQQQNLQN. Composition is skewed to polar residues over residues 1201–1211 and 1251–1273; these read APGNRSRSHSN and QGQSSVDSQSTAEPSPRKASQQA. The segment at 1274 to 1297 adopts a C2H2-type 4 zinc-finger fold; it reads YICPECKKTYASRKNVKRHRMAVH. Disordered regions lie at residues 1333 to 1478, 1569 to 1608, 1624 to 1671, and 1769 to 1822; these read TPDS…ADEE, SVGLPSLASPGEQFGYQQYSQHPQQHPQQHPQQHPQQQQQ, HPPM…LTCS, and ADRQ…PSTN. The segment covering 1388-1403 has biased composition (basic and acidic residues); that stretch reads ERQEPPKKPVADDHKS. 2 stretches are compositionally biased toward pro residues: residues 1407 to 1421 and 1429 to 1445; these read PLPPANTIMPPPPPY and LNPPRTALPPLQLPPLQ. Residues 1589 to 1608 show a composition bias toward low complexity; it reads QHPQQHPQQHPQQHPQQQQQ. Residues 1624-1633 are compositionally biased toward polar residues; sequence HPPMPVSQQF. The C2H2-type 5; degenerate zinc finger occupies 1668–1694; it reads LTCSGCKKILGSDYSLRRHRAGCADVQ. Low complexity predominate over residues 1800–1811; it reads SSSSSSSTSSAS. A C2H2-type 6 zinc finger spans residues 1826–1858; the sequence is HYCQFPECGKNFSSEWNLARHTRESCKMTTRAH.

In terms of tissue distribution, expressed in seam cells, intestine cells, pharyngeal muscles and nerve ring neurons.

Its subcellular location is the nucleus. The protein resides in the cytoplasm. In terms of biological role, RNA-binding protein, which regulates the expression of proteins required to control developmental timing of events during the L2 to L3 larval stage switch. Binds to the 3'UTR of the transcript of the heterochronic protein lin-28 to post-transcriptionally negatively regulate its expression in certain tissue types in the later larval stages. During larval development, controls the timing of seam cell division and terminal differentiation into adult alae. In vitro, it can also bind to DNA through its first zinc finger. May bind directly or indirectly to the promoter of the sex-determining factor xol-1 to activate its transcription. Its activation of xol-1 transcription controls sex determination and X chromosome dosage compensation to promote male development. Through the negative regulation of lin-28 transcript, it also has a role in the fox-1-sex-1-mediated determination of sexual fate. Acts in the intestine to play a role in regulating adult lifespan. The polypeptide is Signal element on autosome protein 2 (Caenorhabditis elegans).